The chain runs to 322 residues: Transcription factor WRKY45-2 (322 aa).

Positions 67–110 are disordered; it reads GGEGSEVQSEVTCGGGASAGGKRKAPAANRKANCRRRTQQSSGN. Residues 112 to 180 constitute a DNA-binding region (WRKY); that stretch reads VVVKNLDDGQ…YIGEHTCRDP (69 aa). A disordered region spans residues 256–284; it reads SDQEEVLSSLTPGSSAARGGGVAGPFGPD.

It belongs to the WRKY group III family. In terms of tissue distribution, expressed in aleurone cells.

The protein localises to the nucleus. In terms of biological role, transcriptional activator involved in defense responses against pathogens. Acts as a positive regulator of defense responses against the rice blast fungus Magnaporthe oryzae. Acts as a positive regulator of defense responses against the bacterial blight Xanthomonas oryzae pv oryzae (Xoo) and the bacterial streak Xanthomonas oryzae pv oryzicola (Xoc). Acts as a positive regulator of abscisic acid (ABA) signaling that suppresses growth of seedlings. Acts as a negative regulator of salt stress response. Acts as a negative regulator of cold stress response. Acts as a negative regulator of drought stress response. In Oryza sativa subsp. indica (Rice), this protein is Transcription factor WRKY45-2.